The sequence spans 420 residues: Serine hydroxymethyltransferase (420 aa).

(6S)-5,6,7,8-tetrahydrofolate contacts are provided by residues leucine 123 and 127–129; that span reads GHL. Position 232 is an N6-(pyridoxal phosphate)lysine (lysine 232). Residue 357-359 participates in (6S)-5,6,7,8-tetrahydrofolate binding; sequence SPF.

Belongs to the SHMT family. As to quaternary structure, homodimer. Pyridoxal 5'-phosphate is required as a cofactor.

Its subcellular location is the cytoplasm. It carries out the reaction (6R)-5,10-methylene-5,6,7,8-tetrahydrofolate + glycine + H2O = (6S)-5,6,7,8-tetrahydrofolate + L-serine. Its pathway is one-carbon metabolism; tetrahydrofolate interconversion. The protein operates within amino-acid biosynthesis; glycine biosynthesis; glycine from L-serine: step 1/1. Functionally, catalyzes the reversible interconversion of serine and glycine with tetrahydrofolate (THF) serving as the one-carbon carrier. This reaction serves as the major source of one-carbon groups required for the biosynthesis of purines, thymidylate, methionine, and other important biomolecules. Also exhibits THF-independent aldolase activity toward beta-hydroxyamino acids, producing glycine and aldehydes, via a retro-aldol mechanism. This chain is Serine hydroxymethyltransferase, found in Streptococcus pyogenes serotype M2 (strain MGAS10270).